We begin with the raw amino-acid sequence, 254 residues long: Leucyl/phenylalanyl-tRNA--protein transferase (254 aa).

Positions M1 to W10 are enriched in pro residues. The interval M1–S28 is disordered.

Belongs to the L/F-transferase family.

The protein resides in the cytoplasm. It carries out the reaction N-terminal L-lysyl-[protein] + L-leucyl-tRNA(Leu) = N-terminal L-leucyl-L-lysyl-[protein] + tRNA(Leu) + H(+). The catalysed reaction is N-terminal L-arginyl-[protein] + L-leucyl-tRNA(Leu) = N-terminal L-leucyl-L-arginyl-[protein] + tRNA(Leu) + H(+). The enzyme catalyses L-phenylalanyl-tRNA(Phe) + an N-terminal L-alpha-aminoacyl-[protein] = an N-terminal L-phenylalanyl-L-alpha-aminoacyl-[protein] + tRNA(Phe). Its function is as follows. Functions in the N-end rule pathway of protein degradation where it conjugates Leu, Phe and, less efficiently, Met from aminoacyl-tRNAs to the N-termini of proteins containing an N-terminal arginine or lysine. The protein is Leucyl/phenylalanyl-tRNA--protein transferase of Albidiferax ferrireducens (strain ATCC BAA-621 / DSM 15236 / T118) (Rhodoferax ferrireducens).